The chain runs to 457 residues: Subtilisin-like serine protease Pen c 2 (457 aa).

The signal sequence occupies residues Met-1 to Ala-16. The propeptide at Ser-17–Phe-136 is removed in mature form. The Inhibitor I9 domain maps to Ser-43 to His-134. The 312-residue stretch at Pro-146 to Tyr-457 folds into the Peptidase S8 domain. Active-site charge relay system residues include Asp-182 and His-214. N-linked (GlcNAc...) asparagine glycosylation is found at Asn-244 and Asn-284. Ser-380 acts as the Charge relay system in catalysis. A glycan (N-linked (GlcNAc...) asparagine) is linked at Asn-447.

This sequence belongs to the peptidase S8 family.

Serine protease. The sequence is that of Subtilisin-like serine protease Pen c 2 from Penicillium citrinum.